Consider the following 174-residue polypeptide: Ribosome maturation factor RimM (174 aa).

The PRC barrel domain occupies 98 to 172 (AGEYYYHQIV…VVTVELMEGL (75 aa)).

Belongs to the RimM family. Binds ribosomal protein uS19.

It is found in the cytoplasm. Functionally, an accessory protein needed during the final step in the assembly of 30S ribosomal subunit, possibly for assembly of the head region. Essential for efficient processing of 16S rRNA. May be needed both before and after RbfA during the maturation of 16S rRNA. It has affinity for free ribosomal 30S subunits but not for 70S ribosomes. The chain is Ribosome maturation factor RimM from Lactiplantibacillus plantarum (strain ATCC BAA-793 / NCIMB 8826 / WCFS1) (Lactobacillus plantarum).